We begin with the raw amino-acid sequence, 508 residues long: Protein S-acyltransferase 18 (508 aa).

Helical transmembrane passes span 17 to 37 and 42 to 62; these read IVGA…LGFF and IAVI…IVLF. One can recognise a DHHC domain in the interval 158–208; sequence SYCSLCDLEVKRSSKHCRTCNRCVEGFDHHCRWLNNCVGKKNYTTFILLMV. The active-site S-palmitoyl cysteine intermediate is C188. 2 consecutive transmembrane segments (helical) span residues 203-223 and 250-270; these read FILL…TALA and WALA…SAAM. The interval 443–468 is disordered; the sequence is VSPGRFSSPRRRFSGSSSSTVPSPKQ. A compositionally biased stretch (low complexity) spans 456 to 466; sequence SGSSSSTVPSP.

It belongs to the DHHC palmitoyltransferase family.

It localises to the endoplasmic reticulum membrane. It is found in the cytoplasmic vesicle membrane. It carries out the reaction L-cysteinyl-[protein] + hexadecanoyl-CoA = S-hexadecanoyl-L-cysteinyl-[protein] + CoA. In terms of biological role, S-acyltransferase involved in protein lipid modification. This is Protein S-acyltransferase 18 (PAT18) from Arabidopsis thaliana (Mouse-ear cress).